The following is a 783-amino-acid chain: Endonuclease MutS2 (783 aa).

Residue 328-335 (GPNTGGKT) participates in ATP binding. In terms of domain architecture, Smr spans 708–783 (LDLRGKRYEE…GSGCTIATLG (76 aa)).

Belongs to the DNA mismatch repair MutS family. MutS2 subfamily. Homodimer. Binds to stalled ribosomes, contacting rRNA.

In terms of biological role, endonuclease that is involved in the suppression of homologous recombination and thus may have a key role in the control of bacterial genetic diversity. Acts as a ribosome collision sensor, splitting the ribosome into its 2 subunits. Detects stalled/collided 70S ribosomes which it binds and splits by an ATP-hydrolysis driven conformational change. Acts upstream of the ribosome quality control system (RQC), a ribosome-associated complex that mediates the extraction of incompletely synthesized nascent chains from stalled ribosomes and their subsequent degradation. Probably generates substrates for RQC. In Streptococcus thermophilus (strain ATCC BAA-250 / LMG 18311), this protein is Endonuclease MutS2.